The primary structure comprises 251 residues: Probable transcriptional regulatory protein Arth_2304 (251 aa).

It belongs to the TACO1 family.

Its subcellular location is the cytoplasm. This chain is Probable transcriptional regulatory protein Arth_2304, found in Arthrobacter sp. (strain FB24).